Here is a 216-residue protein sequence, read N- to C-terminus: [5-(aminomethyl)furan-3-yl]methyl phosphate kinase (216 aa).

ATP contacts are provided by residues 5-9, G39, D142, 147-152, and G166; these read KIGGS and YDKFPG.

The protein belongs to the MfnE family. In terms of assembly, homotrimer. It depends on Mg(2+) as a cofactor.

It catalyses the reaction [5-(aminomethyl)-3-furyl]methyl phosphate + ATP = [5-(aminomethyl)furan-3-yl]methyl diphosphate + ADP. It functions in the pathway cofactor biosynthesis; methanofuran biosynthesis. Inhibited by EDTA. Catalyzes the formation of 5-(aminomethyl)-3-furanmethanol diphosphate (F1-PP) from 5-(aminomethyl)-3-furanmethanol phosphate (F1-P) and ATP. In vitro, can also act as an adenylate kinase that catalyzes the transfer of a phosphoryl group from ATP to AMP, generating two molecules of ADP. This chain is [5-(aminomethyl)furan-3-yl]methyl phosphate kinase, found in Methanocaldococcus jannaschii (strain ATCC 43067 / DSM 2661 / JAL-1 / JCM 10045 / NBRC 100440) (Methanococcus jannaschii).